Here is a 258-residue protein sequence, read N- to C-terminus: Ribosomal RNA small subunit methyltransferase A (258 aa).

The S-adenosyl-L-methionine site is built by histidine 13, leucine 15, glycine 40, glutamate 61, aspartate 86, and asparagine 106.

Belongs to the class I-like SAM-binding methyltransferase superfamily. rRNA adenine N(6)-methyltransferase family. RsmA subfamily.

The protein localises to the cytoplasm. It carries out the reaction adenosine(1518)/adenosine(1519) in 16S rRNA + 4 S-adenosyl-L-methionine = N(6)-dimethyladenosine(1518)/N(6)-dimethyladenosine(1519) in 16S rRNA + 4 S-adenosyl-L-homocysteine + 4 H(+). Specifically dimethylates two adjacent adenosines (A1518 and A1519) in the loop of a conserved hairpin near the 3'-end of 16S rRNA in the 30S particle. May play a critical role in biogenesis of 30S subunits. This Coxiella burnetii (strain Dugway 5J108-111) protein is Ribosomal RNA small subunit methyltransferase A.